Reading from the N-terminus, the 96-residue chain is YcgL domain-containing protein Csal_1462 (96 aa).

Residues 4-88 (RLCEIFKSPR…ARESYLLDLY (85 aa)) enclose the YcgL domain.

This Chromohalobacter salexigens (strain ATCC BAA-138 / DSM 3043 / CIP 106854 / NCIMB 13768 / 1H11) protein is YcgL domain-containing protein Csal_1462.